Here is a 197-residue protein sequence, read N- to C-terminus: Glycerol-3-phosphate acyltransferase (197 aa).

5 consecutive transmembrane segments (helical) span residues 5–25, 54–74, 80–100, 112–132, and 153–173; these read IYIA…GLIL, GLAA…VIIA, AEAA…PVWL, IGVL…LWLA, and IFLW…LTLL.

It belongs to the PlsY family. As to quaternary structure, probably interacts with PlsX.

It is found in the cell inner membrane. The catalysed reaction is an acyl phosphate + sn-glycerol 3-phosphate = a 1-acyl-sn-glycero-3-phosphate + phosphate. It functions in the pathway lipid metabolism; phospholipid metabolism. Functionally, catalyzes the transfer of an acyl group from acyl-phosphate (acyl-PO(4)) to glycerol-3-phosphate (G3P) to form lysophosphatidic acid (LPA). This enzyme utilizes acyl-phosphate as fatty acyl donor, but not acyl-CoA or acyl-ACP. The chain is Glycerol-3-phosphate acyltransferase from Rhodopseudomonas palustris (strain HaA2).